The sequence spans 299 residues: Zinc finger protein 414 (299 aa).

Polar residues-rich tracts occupy residues 1–20 and 69–81; these read MEEP…SSSG and DSCQ…TGVG. The disordered stretch occupies residues 1-98; it reads MEEPSRPSSD…PRRRPPPGKQ (98 aa). C2H2-type zinc fingers lie at residues 99 to 123 and 135 to 159; these read IPCS…LRTH and FRCS…GKLH. A C2H2-type 3; degenerate zinc finger spans residues 166–190; sequence FKCENCLLRFRTHRSLFKHLHVCID. Disordered regions lie at residues 193–228 and 254–299; these read QNPA…PFPL and PRLR…GACR. Positions 203 to 215 are enriched in basic and acidic residues; the sequence is LDKEPPVPERPPE. Residues 217–228 are compositionally biased toward low complexity; that stretch reads DPSSSLGLPFPL.

Belongs to the krueppel C2H2-type zinc-finger protein family.

It localises to the nucleus. May be involved in transcriptional regulation. This is Zinc finger protein 414 (Znf414) from Mus musculus (Mouse).